Reading from the N-terminus, the 86-residue chain is Small ribosomal subunit protein bS20 (86 aa).

It belongs to the bacterial ribosomal protein bS20 family.

In terms of biological role, binds directly to 16S ribosomal RNA. In Arthrobacter sp. (strain FB24), this protein is Small ribosomal subunit protein bS20.